The following is a 216-amino-acid chain: Imidazoleglycerol-phosphate dehydratase (216 aa).

The protein belongs to the imidazoleglycerol-phosphate dehydratase family.

The protein localises to the cytoplasm. The catalysed reaction is D-erythro-1-(imidazol-4-yl)glycerol 3-phosphate = 3-(imidazol-4-yl)-2-oxopropyl phosphate + H2O. Its pathway is amino-acid biosynthesis; L-histidine biosynthesis; L-histidine from 5-phospho-alpha-D-ribose 1-diphosphate: step 6/9. The polypeptide is Imidazoleglycerol-phosphate dehydratase (Nocardia farcinica (strain IFM 10152)).